The sequence spans 657 residues: KNR4/SMI1 homolog (657 aa).

Disordered stretches follow at residues 168-193 (EQQQ…QKGY), 366-402 (SSSV…ESVS), and 416-657 (LTQT…TVAL). A compositionally biased stretch (polar residues) spans 174-187 (KSSSELPQTVTPQA). The span at 416–436 (LTQTDASSKGTTKPATPNPMT) shows a compositional bias: polar residues. 2 stretches are compositionally biased toward low complexity: residues 444 to 455 (STPGSPSAAAEA) and 473 to 482 (TPTVTKESTP). Over residues 492-504 (LDSKNTETNEDTR) the composition is skewed to basic and acidic residues. Polar residues predominate over residues 505 to 521 (ATNTAHSMAPTVSSAIT). 3 stretches are compositionally biased toward basic and acidic residues: residues 535–561 (KPKD…KANE), 569–604 (VEPK…EKKV), and 627–650 (KSDK…KLNE).

This sequence belongs to the KNR4/SMI1 family.

This Eremothecium gossypii (strain ATCC 10895 / CBS 109.51 / FGSC 9923 / NRRL Y-1056) (Yeast) protein is KNR4/SMI1 homolog.